The chain runs to 338 residues: DNA-directed RNA polymerase subunit alpha (338 aa).

Residues 1–233 (MYKNWRELIK…EQLQIFINFD (233 aa)) form an alpha N-terminal domain (alpha-NTD) region. The interval 250–338 (INENLYRSVE…KMIQEGKEDL (89 aa)) is alpha C-terminal domain (alpha-CTD).

This sequence belongs to the RNA polymerase alpha chain family. Homodimer. The RNAP catalytic core consists of 2 alpha, 1 beta, 1 beta' and 1 omega subunit. When a sigma factor is associated with the core the holoenzyme is formed, which can initiate transcription.

It carries out the reaction RNA(n) + a ribonucleoside 5'-triphosphate = RNA(n+1) + diphosphate. In terms of biological role, DNA-dependent RNA polymerase catalyzes the transcription of DNA into RNA using the four ribonucleoside triphosphates as substrates. This Syntrophotalea carbinolica (strain DSM 2380 / NBRC 103641 / GraBd1) (Pelobacter carbinolicus) protein is DNA-directed RNA polymerase subunit alpha.